Here is a 90-residue protein sequence, read N- to C-terminus: Mucin-like protein 1 (90 aa).

The signal sequence occupies residues 1–20 (MKFLAVLVLLGVSIFLVSAQ). O-linked (GalNAc...) threonine glycans are attached at residues threonine 23, threonine 24, threonine 30, threonine 34, threonine 46, threonine 47, threonine 51, threonine 52, threonine 54, threonine 55, threonine 59, threonine 60, threonine 62, and threonine 63. 2 stretches are compositionally biased toward low complexity: residues 25–36 (AAPADTYPATGP) and 44–68 (AETT…ASTT). Residues 25-68 (AAPADTYPATGPADDEAPDAETTAAATTATTAAPTTATTAASTT) form a disordered region. 3 tandem repeats follow at residues 46 to 53 (TTAAATTA), 54 to 61 (TTAAPTTA), and 62 to 69 (TTAASTTA). Residues 46-69 (TTAAATTATTAAPTTATTAASTTA) form a 3 X 8 AA tandem repeat of T-T-A-A-[APS]-T-T-A region. Residue serine 66 is glycosylated (O-linked (GalNAc...) serine). O-linked (GalNAc...) threonine glycans are attached at residues threonine 67 and threonine 68.

O-glycosylated. In terms of tissue distribution, expressed in mammary, salivary glands and prostate. Also detected in lung. Mainly expressed in cancer cell lines of breast origin. Highly expressed in lymph node-positive compared with node-negative tumors. Detected in all lymph node containing metastatic cells.

It localises to the secreted. Its subcellular location is the membrane. May play a role as marker for the diagnosis of metastatic breast cancer. The chain is Mucin-like protein 1 (MUCL1) from Homo sapiens (Human).